A 156-amino-acid polypeptide reads, in one-letter code: WASQVSENRPVCKAVIQGKQLEGLVDTGADVSIIALNQWPKNWPKQKTVTGLVGIVTASEVYQSTEILHCLGPHNQESTVQPMITSIPLNLWGRDLLQQWGAEITMTATLYSPMSQKIMTKMGYIPGKGLGKNEDGIKVPIEAKINHGREGTGYPF.

The region spanning 21–96 (LEGLVDTGAD…IPLNLWGRDL (76 aa)) is the Peptidase A2 domain. Residue D26 is part of the active site. One can recognise a G-patch domain in the interval 111-156 (YSPMSQKIMTKMGYIPGKGLGKNEDGIKVPIEAKINHGREGTGYPF).

Belongs to the peptidase A2 family. HERV class-II K(HML-2) subfamily. In terms of assembly, active as a homodimer. Autoproteolytically processed at the N-terminus. Expected C-terminal autoprocessing not detected. The sequence shown is that of the processed Pro protein.

It catalyses the reaction Processing at the authentic HIV-1 PR recognition site and release of the mature p17 matrix and the p24 capsid protein, as a result of the cleavage of the -SQNY-|-PIVQ- cleavage site.. In terms of biological role, retroviral proteases have roles in the processing of the primary translation products and the maturation of the viral particle. Endogenous Pro proteins may have kept, lost or modified their original function during evolution. The protein is Endogenous retrovirus group K member 18 Pro protein (ERVK-18) of Homo sapiens (Human).